A 333-amino-acid chain; its full sequence is Probable cytosolic iron-sulfur protein assembly protein 1 (333 aa).

WD repeat units follow at residues 12–50, 55–94, 107–146, 153–192, 197–238, 250–288, and 298–333; these read LHDDKCWSVDVNNGGIMATGSTDRKIKLVDIRSFQIIEE, AHKKTVRSVAWRPHSNILAAGSFDSTVSIWGKDDDGYNDE, GHENEIKCVAWSHDGELLATCSRDKSVWIWEADEMGEEFE, EHSQDVKHVIWHQSLPLLASSSYDDTVRIWKDCDDDWECC, GHEG…GEYE, AHTRAVYSVNWSPKGYIASTGSDGRLVIYKESEDGWIVE, and YETNMVKWVEYGSKDVILLITAGDDGHVNVWKFDEN.

The protein belongs to the WD repeat CIA1 family. Interacts with NAR1.

The protein localises to the cytoplasm. It localises to the nucleus. Its function is as follows. Essential component of the cytosolic iron-sulfur (Fe/S) protein assembly machinery. Required for the maturation of extramitochondrial Fe/S proteins. This Kluyveromyces lactis (strain ATCC 8585 / CBS 2359 / DSM 70799 / NBRC 1267 / NRRL Y-1140 / WM37) (Yeast) protein is Probable cytosolic iron-sulfur protein assembly protein 1.